Here is a 542-residue protein sequence, read N- to C-terminus: Phosphoglucomutase (542 aa).

Residues Thr-17, Arg-21, 112–113 (SH), and Lys-125 each bind substrate. Ser-112 acts as the Phosphoserine intermediate in catalysis. Residue Ser-112 participates in Mg(2+) binding. Positions 276, 278, and 280 each coordinate Mg(2+). Residues 280–281 (DR), Thr-343, 362–364 (EES), Lys-375, and Arg-495 each bind substrate.

The protein belongs to the phosphohexose mutase family. It depends on Mg(2+) as a cofactor.

It carries out the reaction alpha-D-glucose 1-phosphate = alpha-D-glucose 6-phosphate. In terms of biological role, this enzyme participates in both the breakdown and synthesis of glucose. Required for the synthesis of capsular polysaccharide and normal lipopolysaccharide. In Rhizobium radiobacter (Agrobacterium tumefaciens), this protein is Phosphoglucomutase (pgm).